Here is a 363-residue protein sequence, read N- to C-terminus: Aspartate-semialdehyde dehydrogenase (363 aa).

7 residues coordinate NADP(+): Thr-15, Gly-16, Ser-17, Val-18, Ser-40, Ser-43, and Leu-87. The active-site Acyl-thioester intermediate is Cys-154. Residue Gly-186 participates in NADP(+) binding. His-251 serves as the catalytic Proton acceptor. Position 341 (Asn-341) interacts with NADP(+).

The protein belongs to the aspartate-semialdehyde dehydrogenase family. In terms of assembly, homotetramer; dimer of dimers.

The protein resides in the cytoplasm. Its subcellular location is the cytosol. It is found in the nucleus. It catalyses the reaction L-aspartate 4-semialdehyde + phosphate + NADP(+) = 4-phospho-L-aspartate + NADPH + H(+). Its pathway is amino-acid biosynthesis; L-methionine biosynthesis via de novo pathway; L-homoserine from L-aspartate: step 2/3. It participates in amino-acid biosynthesis; L-threonine biosynthesis; L-threonine from L-aspartate: step 2/5. Its activity is regulated as follows. Inhibited by 4-amino-3-hydroxynaphthalene-1-sulfonic acid and the competitive inhibitor 1,4-benzoquinone and derivates such as 2-chloro-3-methoxy-1,4-naphthoquinone, 2,3-dichloro-1,4-naphthoquinone, 2-chloro-1,4-naphthoquinone, 2-bromo-1,4-naphthoquinone and 2,3-dichloro-5,8-dihydroxy-1,4-naphthoquinone. Its function is as follows. Catalyzes the NADPH-dependent formation of L-aspartate 4-semialdehyde (L-ASA) by the reductive dephosphorylation of 4-phospho-L-aspartate. Mediates the second step in the biosynthesis of amino acids that derive from aspartate (the aspartate family of amino acids), including methioinine and threonine, the latter of which is a precursor to isoleucine. The chain is Aspartate-semialdehyde dehydrogenase from Aspergillus fumigatus (strain ATCC MYA-4609 / CBS 101355 / FGSC A1100 / Af293) (Neosartorya fumigata).